Consider the following 611-residue polypeptide: Dihydroxy-acid dehydratase (611 aa).

Asp-81 contributes to the Mg(2+) binding site. Residue Cys-122 participates in [2Fe-2S] cluster binding. Residues Asp-123 and Lys-124 each coordinate Mg(2+). N6-carboxylysine is present on Lys-124. Position 195 (Cys-195) interacts with [2Fe-2S] cluster. Residue Glu-491 coordinates Mg(2+). Ser-517 acts as the Proton acceptor in catalysis.

This sequence belongs to the IlvD/Edd family. As to quaternary structure, homodimer. [2Fe-2S] cluster is required as a cofactor. Requires Mg(2+) as cofactor.

It carries out the reaction (2R)-2,3-dihydroxy-3-methylbutanoate = 3-methyl-2-oxobutanoate + H2O. The enzyme catalyses (2R,3R)-2,3-dihydroxy-3-methylpentanoate = (S)-3-methyl-2-oxopentanoate + H2O. The protein operates within amino-acid biosynthesis; L-isoleucine biosynthesis; L-isoleucine from 2-oxobutanoate: step 3/4. Its pathway is amino-acid biosynthesis; L-valine biosynthesis; L-valine from pyruvate: step 3/4. Functions in the biosynthesis of branched-chain amino acids. Catalyzes the dehydration of (2R,3R)-2,3-dihydroxy-3-methylpentanoate (2,3-dihydroxy-3-methylvalerate) into 2-oxo-3-methylpentanoate (2-oxo-3-methylvalerate) and of (2R)-2,3-dihydroxy-3-methylbutanoate (2,3-dihydroxyisovalerate) into 2-oxo-3-methylbutanoate (2-oxoisovalerate), the penultimate precursor to L-isoleucine and L-valine, respectively. In Actinobacillus pleuropneumoniae serotype 3 (strain JL03), this protein is Dihydroxy-acid dehydratase.